We begin with the raw amino-acid sequence, 601 residues long: Trehalose synthase/amylase TreS (601 aa).

Residues 1–21 (MNEAEHSVEHPPVQGSHVEGG) are disordered. Residue Asp-98 participates in substrate binding. Asn-140 is a Ca(2+) binding site. Substrate-binding residues include His-141 and Gln-206. Residue Asp-208 participates in Ca(2+) binding. Arg-236 serves as a coordination point for substrate. Catalysis depends on Asp-238, which acts as the Nucleophile. Tyr-242, Leu-243, and Glu-245 together coordinate Ca(2+). The active-site Proton donor is the Glu-280. Substrate contacts are provided by His-349 and Asp-350.

It belongs to the glycosyl hydrolase 13 family. TreS subfamily. In terms of assembly, homohexamer.

The enzyme catalyses D-maltose = alpha,alpha-trehalose. It carries out the reaction Endohydrolysis of (1-&gt;4)-alpha-D-glucosidic linkages in polysaccharides containing three or more (1-&gt;4)-alpha-linked D-glucose units.. It functions in the pathway glycan biosynthesis; glycogen biosynthesis. Its pathway is capsule biogenesis; capsule polysaccharide biosynthesis. Catalyzes the reversible interconversion of maltose and trehalose by transglucosylation. Also displays amylase activity, catalyzing the endohydrolysis of (1-&gt;4)-alpha-D-glucosidic linkages in glycogen and maltooligosaccharides such as maltoheptaose, to produce maltose which then can be converted to trehalose. TreS plays a key role in the utilization of trehalose for the production of glycogen and alpha-glucan via the TreS-Pep2 branch involved in the biosynthesis of maltose-1-phosphate (M1P). Might also function as a sensor and/or regulator of trehalose levels within the cell. Thus, when trehalose levels in the cell become dangerously low, TreS could expedite the conversion of glycogen to maltose via its amylase activity and then convert the maltose to trehalose; but this enzyme also could expedite or promote the conversion of trehalose to glycogen when cytoplasmic trehalose levels become too high. This is Trehalose synthase/amylase TreS from Mycobacterium tuberculosis (strain CDC 1551 / Oshkosh).